Reading from the N-terminus, the 1192-residue chain is Outer capsid protein VP2 (1192 aa).

Positions 1112 to 1192 (IDQFMLDDMP…QSVAKPGIVR (81 aa)) are disordered. The segment covering 1140–1150 (PSAAANTEAST) has biased composition (low complexity). Over residues 1159-1183 (NVVSPTVPGQPSQTPVNPNQSTELQ) the composition is skewed to polar residues.

It localises to the virion. The catalysed reaction is a 5'-end diphospho-ribonucleoside in mRNA + GTP + H(+) = a 5'-end (5'-triphosphoguanosine)-ribonucleoside in mRNA + diphosphate. It carries out the reaction a 5'-end (5'-triphosphoguanosine)-ribonucleoside in mRNA + S-adenosyl-L-methionine = a 5'-end (N(7)-methyl 5'-triphosphoguanosine)-ribonucleoside in mRNA + S-adenosyl-L-homocysteine. Functionally, outer capsid protein involved in mRNA capping. Catalyzes the last 3 enzymatic activities for formation of the 5' cap structure on the viral plus-strand transcripts, namely the RNA guanylyltransferase, RNA-7N- and RNA-2'O-methyltransferase activities. In Rice ragged stunt virus (isolate Thailand) (RRSV), this protein is Outer capsid protein VP2 (S2).